A 338-amino-acid chain; its full sequence is Ketol-acid reductoisomerase (NADP(+)) (338 aa).

The KARI N-terminal Rossmann domain occupies 1 to 181 (MKVFYDKDCD…GGGRAGIIET (181 aa)). NADP(+) contacts are provided by residues 24–27 (YGSQ), Arg47, and Ser52. Residue His107 is part of the active site. Gly133 is a binding site for NADP(+). The KARI C-terminal knotted domain occupies 182–327 (NFREETETDL…GKLRAMMPWI (146 aa)). Asp190, Glu194, Glu226, and Glu230 together coordinate Mg(2+). Position 251 (Ser251) interacts with substrate.

This sequence belongs to the ketol-acid reductoisomerase family. The cofactor is Mg(2+).

The catalysed reaction is (2R)-2,3-dihydroxy-3-methylbutanoate + NADP(+) = (2S)-2-acetolactate + NADPH + H(+). It carries out the reaction (2R,3R)-2,3-dihydroxy-3-methylpentanoate + NADP(+) = (S)-2-ethyl-2-hydroxy-3-oxobutanoate + NADPH + H(+). The protein operates within amino-acid biosynthesis; L-isoleucine biosynthesis; L-isoleucine from 2-oxobutanoate: step 2/4. It participates in amino-acid biosynthesis; L-valine biosynthesis; L-valine from pyruvate: step 2/4. Involved in the biosynthesis of branched-chain amino acids (BCAA). Catalyzes an alkyl-migration followed by a ketol-acid reduction of (S)-2-acetolactate (S2AL) to yield (R)-2,3-dihydroxy-isovalerate. In the isomerase reaction, S2AL is rearranged via a Mg-dependent methyl migration to produce 3-hydroxy-3-methyl-2-ketobutyrate (HMKB). In the reductase reaction, this 2-ketoacid undergoes a metal-dependent reduction by NADPH to yield (R)-2,3-dihydroxy-isovalerate. The sequence is that of Ketol-acid reductoisomerase (NADP(+)) from Bordetella bronchiseptica (strain ATCC BAA-588 / NCTC 13252 / RB50) (Alcaligenes bronchisepticus).